A 291-amino-acid chain; its full sequence is 33 kDa chaperonin (291 aa).

2 disulfides stabilise this stretch: cysteine 237–cysteine 239 and cysteine 270–cysteine 273.

It belongs to the HSP33 family. In terms of processing, under oxidizing conditions two disulfide bonds are formed involving the reactive cysteines. Under reducing conditions zinc is bound to the reactive cysteines and the protein is inactive.

The protein localises to the cytoplasm. Its function is as follows. Redox regulated molecular chaperone. Protects both thermally unfolding and oxidatively damaged proteins from irreversible aggregation. Plays an important role in the bacterial defense system toward oxidative stress. In Bacillus cytotoxicus (strain DSM 22905 / CIP 110041 / 391-98 / NVH 391-98), this protein is 33 kDa chaperonin.